We begin with the raw amino-acid sequence, 287 residues long: Undecaprenyl-diphosphatase (287 aa).

The next 7 helical transmembrane spans lie at 6-26, 45-65, 89-109, 111-131, 204-224, 238-258, and 266-286; these read LHLL…FIPV, SGKV…MWIF, NLLL…KSIK, VFYH…IMLW, ATEF…VYDL, AIAV…RAVL, and YRVF…WIYA.

The protein belongs to the UppP family.

It is found in the cell inner membrane. The catalysed reaction is di-trans,octa-cis-undecaprenyl diphosphate + H2O = di-trans,octa-cis-undecaprenyl phosphate + phosphate + H(+). Catalyzes the dephosphorylation of undecaprenyl diphosphate (UPP). Confers resistance to bacitracin. The polypeptide is Undecaprenyl-diphosphatase (Bordetella bronchiseptica (strain ATCC BAA-588 / NCTC 13252 / RB50) (Alcaligenes bronchisepticus)).